Consider the following 481-residue polypeptide: N-succinylglutamate 5-semialdehyde dehydrogenase (481 aa).

An NAD(+)-binding site is contributed by 206–211; sequence GSARTG. Catalysis depends on residues Glu-229 and Cys-263.

Belongs to the aldehyde dehydrogenase family. AstD subfamily.

It catalyses the reaction N-succinyl-L-glutamate 5-semialdehyde + NAD(+) + H2O = N-succinyl-L-glutamate + NADH + 2 H(+). The protein operates within amino-acid degradation; L-arginine degradation via AST pathway; L-glutamate and succinate from L-arginine: step 4/5. In terms of biological role, catalyzes the NAD-dependent reduction of succinylglutamate semialdehyde into succinylglutamate. This chain is N-succinylglutamate 5-semialdehyde dehydrogenase, found in Sphingopyxis alaskensis (strain DSM 13593 / LMG 18877 / RB2256) (Sphingomonas alaskensis).